The following is an 802-amino-acid chain: Leucine--tRNA ligase (802 aa).

The 'HIGH' region motif lies at 40 to 51 (PYPSGAGLHVGH). Positions 576–580 (KMSKS) match the 'KMSKS' region motif. ATP is bound at residue Lys579.

Belongs to the class-I aminoacyl-tRNA synthetase family.

The protein resides in the cytoplasm. It carries out the reaction tRNA(Leu) + L-leucine + ATP = L-leucyl-tRNA(Leu) + AMP + diphosphate. The sequence is that of Leucine--tRNA ligase from Bacillus anthracis (strain A0248).